The following is a 548-amino-acid chain: Leucine-rich repeat LGI family member 3 (548 aa).

An N-terminal signal peptide occupies residues 1-30 (MAGLRARRGPAPGLLALSALGFCLMLQVSA). Positions 31-64 (KRLPKTPPCPPSCSCTRDTAFCVDSKAVPRNLPS) constitute an LRRNT domain. 3 LRR repeats span residues 89 to 110 (LLQFLLLNSNKFTLIGDNAFTG), 113 to 134 (HLQYLFIENNDIWTLSKFTFRG), and 137 to 158 (SLTHLSLANNNLQTLPRDIFRP). One can recognise an LRRCT domain in the interval 170-220 (NSLNCDCKVKWLVEWLAHTNTTVAPIYCASPPRFQEHKVQDLPLREFDCIT). Residue asparagine 189 is glycosylated (N-linked (GlcNAc...) asparagine). EAR repeat units follow at residues 222–264 (DFVL…KWDY) and 268–310 (QLRD…HWDP). An N-linked (GlcNAc...) asparagine glycan is attached at asparagine 311. 5 EAR repeats span residues 314–361 (RFTK…RWHQ), 363–406 (GFYS…QWSR), 410–453 (QFVA…RWEG), 455–497 (RFSE…QWDE), and 501–543 (KFVR…RHVV). Asparagine 394 carries N-linked (GlcNAc...) asparagine glycosylation.

Interacts with STX1A.

It localises to the secreted. The protein resides in the cytoplasmic vesicle. Its subcellular location is the secretory vesicle. The protein localises to the synaptic vesicle. It is found in the synapse. It localises to the synaptosome. Its function is as follows. May participate in the regulation of neuronal exocytosis. The sequence is that of Leucine-rich repeat LGI family member 3 (LGI3) from Macaca fascicularis (Crab-eating macaque).